The following is a 317-amino-acid chain: tRNA dimethylallyltransferase (317 aa).

14 to 21 (GPTAVGKT) is a binding site for ATP. Position 16-21 (16-21 (TAVGKT)) interacts with substrate. Residues 39-42 (DSMQ) are interaction with substrate tRNA.

This sequence belongs to the IPP transferase family. As to quaternary structure, monomer. Mg(2+) serves as cofactor.

It catalyses the reaction adenosine(37) in tRNA + dimethylallyl diphosphate = N(6)-dimethylallyladenosine(37) in tRNA + diphosphate. Functionally, catalyzes the transfer of a dimethylallyl group onto the adenine at position 37 in tRNAs that read codons beginning with uridine, leading to the formation of N6-(dimethylallyl)adenosine (i(6)A). In Bacillus cereus (strain G9842), this protein is tRNA dimethylallyltransferase.